A 264-amino-acid chain; its full sequence is Major prion protein (264 aa).

Positions M1–C24 are cleaved as a signal peptide. The interaction with GRB2, ERI3 and SYN1 stretch occupies residues K25–A241. The segment at R27 to N119 is disordered. 6 consecutive repeat copies span residues S54 to Q62, P63 to Q70, P71 to Q78, P79 to Q86, P87 to Q94, and P95 to Q103. Residues S54–Q103 are 6 X 8 AA tandem repeats of P-H-G-G-G-W-G-Q. Positions Q55 to G105 are enriched in gly residues. H72, G73, G74, H80, G81, G82, H88, G89, G90, H96, G98, and G99 together coordinate Cu(2+). Residues C190 and C225 are joined by a disulfide bond. N-linked (GlcNAc...) asparagine glycans are attached at residues N192 and N208. A lipid anchor (GPI-anchor amidated alanine) is attached at A241. Positions S242–G264 are cleaved as a propeptide — removed in mature form.

This sequence belongs to the prion family. In terms of assembly, monomer and homodimer. Has a tendency to aggregate into amyloid fibrils containing a cross-beta spine, formed by a steric zipper of superposed beta-strands. Soluble oligomers may represent an intermediate stage on the path to fibril formation. Copper binding may promote oligomerization. Interacts with GRB2, APP, ERI3/PRNPIP and SYN1. Mislocalized cytosolically exposed PrP interacts with MGRN1; this interaction alters MGRN1 subcellular location and causes lysosomal enlargement. Interacts with KIAA1191.

The protein resides in the cell membrane. Its subcellular location is the golgi apparatus. Functionally, its primary physiological function is unclear. Has cytoprotective activity against internal or environmental stresses. May play a role in neuronal development and synaptic plasticity. May be required for neuronal myelin sheath maintenance. May play a role in iron uptake and iron homeostasis. Soluble oligomers are toxic to cultured neuroblastoma cells and induce apoptosis (in vitro). Association with GPC1 (via its heparan sulfate chains) targets PRNP to lipid rafts. Also provides Cu(2+) or Zn(2+) for the ascorbate-mediated GPC1 deaminase degradation of its heparan sulfate side chains. In Bubalus bubalis (Domestic water buffalo), this protein is Major prion protein (PRNP).